The sequence spans 84 residues: Short neurotoxin SNTX-1 (84 aa).

Residues 1–21 (MKTLLLILVVVTIVCLDLVCC) form the signal peptide. Disulfide bonds link C25–C46, C39–C63, C65–C76, and C77–C82.

The protein belongs to the three-finger toxin family. Short-chain subfamily. Type I alpha-neurotoxin sub-subfamily. In terms of tissue distribution, expressed by the venom gland.

The protein localises to the secreted. Binds to muscle nicotinic acetylcholine receptor (nAChR) and inhibit acetylcholine from binding to the receptor, thereby impairing neuromuscular transmission. This Demansia vestigiata (Lesser black whip snake) protein is Short neurotoxin SNTX-1.